The following is a 345-amino-acid chain: Dihydroorotase (345 aa).

Zn(2+)-binding residues include H13 and H15. Substrate is bound by residues 15-17 (HFR) and N41. K98, H135, and H173 together coordinate Zn(2+). K98 carries the N6-carboxylysine modification. H135 contributes to the substrate binding site. A substrate-binding site is contributed by L218. D246 lines the Zn(2+) pocket. D246 is a catalytic residue. H250 and A262 together coordinate substrate.

Belongs to the metallo-dependent hydrolases superfamily. DHOase family. Class II DHOase subfamily. In terms of assembly, homodimer. Zn(2+) serves as cofactor.

It carries out the reaction (S)-dihydroorotate + H2O = N-carbamoyl-L-aspartate + H(+). Its pathway is pyrimidine metabolism; UMP biosynthesis via de novo pathway; (S)-dihydroorotate from bicarbonate: step 3/3. Catalyzes the reversible cyclization of carbamoyl aspartate to dihydroorotate. This chain is Dihydroorotase, found in Shewanella piezotolerans (strain WP3 / JCM 13877).